The chain runs to 308 residues: Taste receptor type 2 member 107 (308 aa).

Residues 1–7 (MLSAAEG) lie on the Extracellular side of the membrane. A helical transmembrane segment spans residues 8 to 28 (ILLCVVTSEAVLGVLGDTFIA). Residues 29–43 (LANCMEYAKNKKLSK) lie on the Cytoplasmic side of the membrane. The helical transmembrane segment at 44–64 (IGFILIGLAISRIGVVWIIIL) threads the bilayer. Residues 65–94 (QGYMQVFFPHILTFGNITEYITYIWVFLNH) are Extracellular-facing. N-linked (GlcNAc...) asparagine glycosylation is present at Asn-80. A helical membrane pass occupies residues 95-115 (LSVWFATNLNILYFLKIANFS). Residues 116–127 (NSVFLWLKSRVR) lie on the Cytoplasmic side of the membrane. Residues 128–148 (VVFIFLSGCLLTSWLLCFPQF) traverse the membrane as a helical segment. Residues 149–180 (SKMLNNSKMYWGNTSWLQQQKNVFLINQSLTN) are Extracellular-facing. Residues Asn-153, Asn-161, and Asn-175 are each glycosylated (N-linked (GlcNAc...) asparagine). The chain crosses the membrane as a helical span at residues 181–201 (LGIFFFIIVSLITCFLLIVFL). Residues 202–232 (WRHIRQMHSDGSGLRDLNTEAHVKAMRVLIS) are Cytoplasmic-facing. A helical membrane pass occupies residues 233-253 (FAVLFILHFVGLSIQVLCFFL). At 254–258 (PQNNL) the chain is on the extracellular side. A helical membrane pass occupies residues 259-279 (LFITGLIATCLYPCGHSIILI). Residues 280–308 (LGNKQLKQASLKALQHLTCCETKRNLSVT) are Cytoplasmic-facing.

This sequence belongs to the G-protein coupled receptor T2R family.

Its subcellular location is the membrane. Its function is as follows. Putative taste receptor which may play a role in the perception of bitterness. The protein is Taste receptor type 2 member 107 of Rattus norvegicus (Rat).